The chain runs to 87 residues: MAEEDIETKIKNYKTAPFDSRFPNQNQTRNCWQNYLDFHRCQKAMTTKGGNVSVCEWYQRVYQSLCPTSWVTDWDEQRAEGTFPGKI.

In terms of domain architecture, CHCH spans 28 to 74 (TRNCWQNYLDFHRCQKAMTTKGGNVSVCEWYQRVYQSLCPTSWVTDW). Residues 31-41 (CWQNYLDFHRC) carry the Cx9C motif motif. 2 disulfide bridges follow: cysteine 31-cysteine 66 and cysteine 41-cysteine 55. The Cx10C motif motif lies at 55-66 (CEWYQRVYQSLC).

The protein localises to the mitochondrion intermembrane space. In terms of biological role, connects the two COX monomers into the physiological dimeric form. In Macaca fascicularis (Crab-eating macaque), this protein is Cytochrome c oxidase subunit 6B1 (COX6B1).